We begin with the raw amino-acid sequence, 729 residues long: Monosaccharide-sensing protein 2 (729 aa).

The next 6 membrane-spanning stretches (helical) occupy residues 1–21, 47–67, 81–101, 104–124, 139–159, and 165–185; these read MSGA…QGWD, LIVA…GGVA, ILYF…VLLL, LLDG…ISET, FTGS…SLMP, and LMLG…VFFL. The span at 347–363 shows a compositional bias: acidic residues; sequence VGEGEDYPSDHGDDSED. Disordered stretches follow at residues 347–367 and 423–442; these read VGEG…DLHS and ERED…RRGS. The span at 423 to 434 shows a compositional bias: basic and acidic residues; sequence EREDESGQKEEG. Residues Ser438 and Gly448 each carry the phosphoserine modification. 6 helical membrane-spanning segments follow: residues 507 to 527, 553 to 573, 585 to 605, 610 to 630, 650 to 670, and 679 to 699; these read ALVV…NGVL, ASLL…AVAM, LLTT…SNLV, IVHA…FVMG, ICIA…TYSL, and LAGV…FVFI.

This sequence belongs to the major facilitator superfamily. Sugar transporter (TC 2.A.1.1) family. As to expression, mostly expressed in roots and stems, and, to a lower extent, in juvenile and adult leaves, and in flower tissues.

It localises to the vacuole membrane. The enzyme catalyses D-glucose(out) + H(+)(in) = D-glucose(in) + H(+)(out). It catalyses the reaction sucrose(out) + H(+)(in) = sucrose(in) + H(+)(out). Functionally, sugar proton-coupled antiporter which contributes to vacuolar sugar import (e.g. monosaccharides including glucose, sucrose and fructose), particularly during stress responses (e.g. in response to cold). The protein is Monosaccharide-sensing protein 2 of Arabidopsis thaliana (Mouse-ear cress).